Consider the following 466-residue polypeptide: Glutamate decarboxylase beta (466 aa).

The substrate site is built by T62 and N83. Pyridoxal 5'-phosphate is bound by residues 126–127, T212, and H275; that span reads SS. K276 is modified (N6-(pyridoxal phosphate)lysine). K446, K453, and K464 each carry N6-acetyllysine.

The protein belongs to the group II decarboxylase family. Homohexamer composed of three dimers. Requires pyridoxal 5'-phosphate as cofactor.

It catalyses the reaction L-glutamate + H(+) = 4-aminobutanoate + CO2. Functionally, converts glutamate to gamma-aminobutyrate (GABA), consuming one intracellular proton in the reaction. The gad system helps to maintain a near-neutral intracellular pH when cells are exposed to extremely acidic conditions. The ability to survive transit through the acidic conditions of the stomach is essential for successful colonization of the mammalian host by commensal and pathogenic bacteria. This is Glutamate decarboxylase beta (gadB) from Escherichia coli O6:H1 (strain CFT073 / ATCC 700928 / UPEC).